Reading from the N-terminus, the 266-residue chain is Phosphatidylglycerol--prolipoprotein diacylglyceryl transferase (266 aa).

4 consecutive transmembrane segments (helical) span residues 14-34, 55-75, 91-111, and 117-137; these read FGPL…AFFW, FLFY…ILFY, WKGG…MWLF, and VSMF…LFFG. Arg-138 is a binding site for a 1,2-diacyl-sn-glycero-3-phospho-(1'-sn-glycerol). 3 helical membrane passes run 172–192, 201–221, and 235–255; these read YPTQ…ILMF, GAAS…VEFF, and WVTM…ALVV.

The protein belongs to the Lgt family.

The protein resides in the cell inner membrane. It carries out the reaction L-cysteinyl-[prolipoprotein] + a 1,2-diacyl-sn-glycero-3-phospho-(1'-sn-glycerol) = an S-1,2-diacyl-sn-glyceryl-L-cysteinyl-[prolipoprotein] + sn-glycerol 1-phosphate + H(+). It functions in the pathway protein modification; lipoprotein biosynthesis (diacylglyceryl transfer). Functionally, catalyzes the transfer of the diacylglyceryl group from phosphatidylglycerol to the sulfhydryl group of the N-terminal cysteine of a prolipoprotein, the first step in the formation of mature lipoproteins. In Hydrogenovibrio crunogenus (strain DSM 25203 / XCL-2) (Thiomicrospira crunogena), this protein is Phosphatidylglycerol--prolipoprotein diacylglyceryl transferase.